Here is a 158-residue protein sequence, read N- to C-terminus: MAFQILLNVFLAFCWMFLSNSPSAAGFITGYILGMLSLFFFRRFFTRQFYLWKLISIIKLCFIFIKELYLANVSVMKSVLSPKLNIRPGIFAFKTELTKDWEITMLSLLITLTPGTLVMDISDDRTILYIHAMDIEDAEKAIFDIRESFEKAIQEVSR.

The next 2 membrane-spanning stretches (helical) occupy residues 21 to 41 (SPSA…LFFF) and 51 to 71 (LWKL…LYLA).

This sequence belongs to the CPA3 antiporters (TC 2.A.63) subunit E family. In terms of assembly, forms a heterooligomeric complex that consists of seven subunits: MrpA, MrpB, MrpC, MrpD, MrpE, MrpF and MrpG.

It is found in the cell membrane. Its function is as follows. Mrp complex is a Na(+)/H(+) antiporter that is considered to be the major Na(+) excretion system in B.subtilis. Has a major role in Na(+) resistance and a minor role in Na(+)- and K(+)-dependent pH homeostasis as compared to TetB. MrpA may be the actual Na(+)/H(+) antiporter, although the six other Mrp proteins are all required for Na(+)/H(+) antiport activity and Na(+) resistance. MrpA is required for initiation of sporulation when external Na(+) concentration increases. Also transports Li(+) but not K(+), Ca(2+) or Mg(2+). The chain is Na(+)/H(+) antiporter subunit E (mrpE) from Bacillus subtilis (strain 168).